We begin with the raw amino-acid sequence, 633 residues long: Kinesin-like motor protein 9 (633 aa).

Positions 1–392 (MIQIFLRVKK…MRYSANAREI (392 aa)) constitute a Kinesin motor domain. An ATP-binding site is contributed by 94-101 (GVSGAGKT). Disordered regions lie at residues 393-423 (LPPP…TKAL), 531-556 (LEEE…SRKL), and 575-633 (KLWP…INEL). Polar residues predominate over residues 398-423 (NENSGSQSPSHSLLQKSKNTSSTKAL). Residues 417 to 541 (TSSTKALTSH…EEESIKESSA (125 aa)) are a coiled coil. Positions 578 to 587 (PQSTLIQAPN) are enriched in polar residues. Positions 604–623 (VSPIKPLSPSRRPPLTSLYS) are enriched in low complexity. A phosphoserine mark is found at Ser605, Ser611, and Ser613. Residues 624–633 (GTTDIDINEL) show a composition bias toward polar residues.

This sequence belongs to the TRAFAC class myosin-kinesin ATPase superfamily. Kinesin family. As to quaternary structure, interacts with ase1. Phosphorylated by cdc2 and dephosphorylated by clp1. Dephosphorylation is required for the interaction with ase1.

It is found in the nucleus. The protein localises to the cytoplasm. It localises to the cytoskeleton. The protein resides in the microtubule organizing center. Its subcellular location is the spindle pole body. Kinesin-like motor protein involved in anaphase B spindle elongation. The polypeptide is Kinesin-like motor protein 9 (klp9) (Schizosaccharomyces pombe (strain 972 / ATCC 24843) (Fission yeast)).